The sequence spans 227 residues: CDP-diacylglycerol--inositol 3-phosphatidyltransferase 1 (227 aa).

A run of 2 helical transmembrane segments spans residues 12–36 (LSVY…AFAV) and 42–61 (PLFS…DGWV). Residues aspartate 55 and aspartate 58 each coordinate Mg(2+). A CDP-1,2-diacyl-sn-glycerol contacts are provided by glycine 59, arginine 63, and serine 69. 4 helical membrane passes run 73–95 (AVLD…SQIY), 101–122 (FLSL…TFLA), 142–165 (YGNR…LLLI), and 177–200 (VVAT…GWSM). Residues aspartate 76 and aspartate 80 each coordinate Mg(2+). Aspartate 80 functions as the Proton acceptor in the catalytic mechanism.

Belongs to the CDP-alcohol phosphatidyltransferase class-I family. The cofactor is Mg(2+). Requires Mn(2+) as cofactor. As to expression, expressed in stems, flowers, shoots and roots. Present in epidermal tissues.

It localises to the membrane. It catalyses the reaction a CDP-1,2-diacyl-sn-glycerol + myo-inositol = a 1,2-diacyl-sn-glycero-3-phospho-(1D-myo-inositol) + CMP + H(+). Catalyzes the biosynthesis of phosphatidylinositol (PtdIns) as well as PtdIns:inositol exchange reaction. May thus act to reduce an excessive cellular PtdIns content. The exchange activity is due to the reverse reaction of PtdIns synthase and is dependent on CMP, which is tightly bound to the enzyme. The protein is CDP-diacylglycerol--inositol 3-phosphatidyltransferase 1 (PIS1) of Arabidopsis thaliana (Mouse-ear cress).